Reading from the N-terminus, the 122-residue chain is Small ribosomal subunit protein uS13 (122 aa).

The segment at 95-122 (GLPVRGQKTKTNARTRKGPKRTVANKKK) is disordered.

This sequence belongs to the universal ribosomal protein uS13 family. In terms of assembly, part of the 30S ribosomal subunit. Forms a loose heterodimer with protein S19. Forms two bridges to the 50S subunit in the 70S ribosome.

Functionally, located at the top of the head of the 30S subunit, it contacts several helices of the 16S rRNA. In the 70S ribosome it contacts the 23S rRNA (bridge B1a) and protein L5 of the 50S subunit (bridge B1b), connecting the 2 subunits; these bridges are implicated in subunit movement. Contacts the tRNAs in the A and P-sites. This is Small ribosomal subunit protein uS13 from Lachnoclostridium phytofermentans (strain ATCC 700394 / DSM 18823 / ISDg) (Clostridium phytofermentans).